The chain runs to 141 residues: Ribonuclease P protein component (141 aa).

Disordered stretches follow at residues 37–56 (RTEE…VGFT) and 114–141 (RRIT…VNGK). Over residues 114 to 123 (RRITAKGERR) the composition is skewed to basic and acidic residues.

The protein belongs to the RnpA family. In terms of assembly, consists of a catalytic RNA component (M1 or rnpB) and a protein subunit.

It catalyses the reaction Endonucleolytic cleavage of RNA, removing 5'-extranucleotides from tRNA precursor.. RNaseP catalyzes the removal of the 5'-leader sequence from pre-tRNA to produce the mature 5'-terminus. It can also cleave other RNA substrates such as 4.5S RNA. The protein component plays an auxiliary but essential role in vivo by binding to the 5'-leader sequence and broadening the substrate specificity of the ribozyme. The polypeptide is Ribonuclease P protein component (Brucella suis biovar 1 (strain 1330)).